A 176-amino-acid polypeptide reads, in one-letter code: Pituitary adenylate cyclase-activating polypeptide (176 aa).

Residues 1-24 form the signal peptide; that stretch reads MTMCSGARLALLVYGILMHSSVYG. Residues 25 to 80 constitute a propeptide that is removed on maturation; the sequence is SPAASGLRFPGIRPENEAYDEDGNPQQDFYDSEPPGVGSPASALRDAYALYYPAEE. 2 disordered regions span residues 36-62 and 115-134; these read IRPENEAYDEDGNPQQDFYDSEPPGVG and GTPGGGADDDSEPLSKRHSD. An important for receptor binding region spans residues 150–158; the sequence is VKKYLAAVL. Leu-158 is subject to Leucine amide. Residue Lys-169 is modified to Lysine amide. Positions 173-176 are excised as a propeptide; that stretch reads IPYL.

The protein belongs to the glucagon family.

Its subcellular location is the secreted. In terms of biological role, PACAP is a neuropeptide involved in diverse array of physiological processes through activating the PACAP subfamily of class B1 G protein-coupled receptors: VIP receptor 1 (VIPR1), VIP receptor 2 (VIPR2), and PACAP type I receptor (ADCYAP1R1). Exerts neuroprotective and general cytoprotective effects due to anti-apoptotic, anti-inflammatory, and antioxidant actions. Promotes neuron projection development through the RAPGEF2/Rap1/B-Raf/ERK pathway. In chromaffin cells, induces long-lasting increase of intracellular calcium concentrations and neuroendocrine secretion. Involved in the control of glucose homeostasis, induces insulin secretion by pancreatic beta cells. PACAP exists in two bioactive forms from proteolysis of the same precursor protein, PACAP27 and PACAP38, which differ by eleven amino acid residues in the C-terminus. The chain is Pituitary adenylate cyclase-activating polypeptide (ADCYAP1) from Ovis aries (Sheep).